Consider the following 1061-residue polypeptide: TonB-dependent transporter Oar (1061 aa).

Residues 1–26 (MHLNRVLRETGVVVAAGLLYGSAAFA) form the signal peptide. Residues 121 to 243 (EIVGAPPTID…TGGVINAVTR (123 aa)) enclose the TBDR plug domain. Residues 248–1061 (EFHGSVFANW…QVRFGIRYTF (814 aa)) enclose the TBDR beta-barrel domain. The disordered stretch occupies residues 701-722 (RSLAEPGQGTATSCDPSSFESQ). Over residues 709–722 (GTATSCDPSSFESQ) the composition is skewed to polar residues.

This sequence belongs to the TonB-dependent receptor family. In terms of assembly, interacts with TonB. Part of a transport system composed of the outer membrane transporter Oar, the trans-periplasmic binding protein TonB and the inner membrane proteins ExbB and ExbD.

The protein resides in the cell outer membrane. In terms of biological role, required for secretion of the protease PopC across the bacterial outer membrane. Binds and probably transports PopC from the periplasm to the extracellular milieu. It derives its energy for transport by interacting with the trans-periplasmic membrane protein TonB. Required for cellular adhesion during fruiting body formation, a multicellular developmental program that is induced in response to starvation. The sequence is that of TonB-dependent transporter Oar from Myxococcus xanthus.